We begin with the raw amino-acid sequence, 190 residues long: Interferon alpha-7 (190 aa).

Positions 1–23 (MARLCAFLMVLAVMSYWPTCCLG) are cleaved as a signal peptide. Cystine bridges form between cysteine 24/cysteine 122 and cysteine 52/cysteine 162. N-linked (GlcNAc...) asparagine glycosylation occurs at asparagine 101.

This sequence belongs to the alpha/beta interferon family.

Its subcellular location is the secreted. Produced by macrophages, IFN-alpha have antiviral activities. Interferon stimulates the production of two enzymes: a protein kinase and an oligoadenylate synthetase. This Mus musculus (Mouse) protein is Interferon alpha-7 (Ifna7).